Consider the following 422-residue polypeptide: Transcription termination factor Rho (422 aa).

The 76-residue stretch at 52–127 (EVGGDGVLEV…TRVTKINFDD (76 aa)) folds into the Rho RNA-BD domain. Residues 173 to 178 (GKGQRG), 185 to 190 (RTGKTV), and R216 contribute to the ATP site.

The protein belongs to the Rho family. Homohexamer. The homohexamer assembles into an open ring structure.

Its function is as follows. Facilitates transcription termination by a mechanism that involves Rho binding to the nascent RNA, activation of Rho's RNA-dependent ATPase activity, and release of the mRNA from the DNA template. This Cereibacter sphaeroides (strain ATCC 17023 / DSM 158 / JCM 6121 / CCUG 31486 / LMG 2827 / NBRC 12203 / NCIMB 8253 / ATH 2.4.1.) (Rhodobacter sphaeroides) protein is Transcription termination factor Rho.